The primary structure comprises 248 residues: Methionine aminopeptidase (248 aa).

His-77 provides a ligand contact to substrate. Residues Asp-94, Asp-105, and His-169 each coordinate a divalent metal cation. Residue His-176 coordinates substrate. Positions 202 and 233 each coordinate a divalent metal cation.

Belongs to the peptidase M24A family. Methionine aminopeptidase type 1 subfamily. Monomer. The cofactor is Co(2+). It depends on Zn(2+) as a cofactor. Requires Mn(2+) as cofactor. Fe(2+) is required as a cofactor.

It catalyses the reaction Release of N-terminal amino acids, preferentially methionine, from peptides and arylamides.. Its function is as follows. Removes the N-terminal methionine from nascent proteins. The N-terminal methionine is often cleaved when the second residue in the primary sequence is small and uncharged (Met-Ala-, Cys, Gly, Pro, Ser, Thr, or Val). Requires deformylation of the N(alpha)-formylated initiator methionine before it can be hydrolyzed. This chain is Methionine aminopeptidase, found in Mycoplasma genitalium (strain ATCC 33530 / DSM 19775 / NCTC 10195 / G37) (Mycoplasmoides genitalium).